Consider the following 278-residue polypeptide: 4-deoxy-L-threo-5-hexosulose-uronate ketol-isomerase (278 aa).

Zn(2+)-binding residues include His196, His198, Glu203, and His245.

It belongs to the KduI family. Zn(2+) is required as a cofactor.

It catalyses the reaction 5-dehydro-4-deoxy-D-glucuronate = 3-deoxy-D-glycero-2,5-hexodiulosonate. It functions in the pathway glycan metabolism; pectin degradation; 2-dehydro-3-deoxy-D-gluconate from pectin: step 4/5. Catalyzes the isomerization of 5-dehydro-4-deoxy-D-glucuronate to 3-deoxy-D-glycero-2,5-hexodiulosonate. The polypeptide is 4-deoxy-L-threo-5-hexosulose-uronate ketol-isomerase (Yersinia pestis bv. Antiqua (strain Antiqua)).